The primary structure comprises 352 residues: Ion-translocating oxidoreductase complex subunit D (352 aa).

4 helical membrane-spanning segments follow: residues 20–40 (IMLLVLLAAVPGIAAQLWFFG), 42–62 (GTLVQILLASVSALLAEALVL), 89–109 (IPPLAPWWMVVLGTVFAAIIA), and 123–143 (PAMIGYVVLLISFPVQMTSWL). Thr-187 carries the FMN phosphoryl threonine modification. The next 5 membrane-spanning stretches (helical) occupy residues 214–234 (ILAGAGWQWVNLAWLAGGLWL), 242–262 (WHIPLSFLVTLALCATLGWLF), 267–287 (LAAPQIHLLSGATMLGAFFIL), 301–321 (LIFGALAGLLVWLIRSFGGYP), and 322–342 (DGVAFAVLLANITVPLIDYYT).

Belongs to the NqrB/RnfD family. In terms of assembly, the complex is composed of six subunits: RsxA, RsxB, RsxC, RsxD, RsxE and RsxG. Requires FMN as cofactor.

It localises to the cell inner membrane. Its function is as follows. Part of a membrane-bound complex that couples electron transfer with translocation of ions across the membrane. Required to maintain the reduced state of SoxR. The protein is Ion-translocating oxidoreductase complex subunit D of Escherichia coli (strain ATCC 8739 / DSM 1576 / NBRC 3972 / NCIMB 8545 / WDCM 00012 / Crooks).